We begin with the raw amino-acid sequence, 219 residues long: Leucyl/phenylalanyl-tRNA--protein transferase (219 aa).

This sequence belongs to the L/F-transferase family.

It is found in the cytoplasm. It catalyses the reaction N-terminal L-lysyl-[protein] + L-leucyl-tRNA(Leu) = N-terminal L-leucyl-L-lysyl-[protein] + tRNA(Leu) + H(+). The enzyme catalyses N-terminal L-arginyl-[protein] + L-leucyl-tRNA(Leu) = N-terminal L-leucyl-L-arginyl-[protein] + tRNA(Leu) + H(+). The catalysed reaction is L-phenylalanyl-tRNA(Phe) + an N-terminal L-alpha-aminoacyl-[protein] = an N-terminal L-phenylalanyl-L-alpha-aminoacyl-[protein] + tRNA(Phe). Functions in the N-end rule pathway of protein degradation where it conjugates Leu, Phe and, less efficiently, Met from aminoacyl-tRNAs to the N-termini of proteins containing an N-terminal arginine or lysine. The chain is Leucyl/phenylalanyl-tRNA--protein transferase from Leptospira interrogans serogroup Icterohaemorrhagiae serovar copenhageni (strain Fiocruz L1-130).